The primary structure comprises 290 residues: Secreted chorismate mutase (290 aa).

The first 21 residues, 1 to 21 (MKLSVSIFVLLAVSAFGGGSA), serve as a signal peptide directing secretion. The segment at 117–140 (VVLSRDTVLDKPVVGKGIFPIGRR) is KWL1-binding extensive loop region (ELR). 2 N-linked (GlcNAc...) asparagine glycosylation sites follow: N159 and N208.

In terms of assembly, homodimer. Forms a heterodimer with the host cytosolic chorismate mutase CM2. Interacts with the host kiwellin KWL1 which acts as a defense protein that protects maize from infection.

The protein localises to the secreted. It localises to the host cytoplasm. Its subcellular location is the host cytosol. It catalyses the reaction chorismate = prephenate. With respect to regulation, contrary to classical chorismate mutases, CMU1 is not subject to allosteric regulation by tryptophan and tyrosine. Activity is decreased in a non-competitive and allosteric manner by the binding of the host defense kiwellin KWL1 which probably blocks substrate access to the active site of CMU1. Secreted chorismate mutase that is one component of a cocktail of effectors shaping the host metabolome and acting as virulence factors. The enzyme is taken up by plant cells, can spread to neighboring cells where it affects the biosynthesis of the plant immune signal salicylic acid by channelling chorismate into the phenylpropanoid pathway. Interferes with the activity of host cytosolic chorismate mutase CM2 through heterodimerization. The polypeptide is Secreted chorismate mutase (CMU1) (Mycosarcoma maydis (Corn smut fungus)).